The sequence spans 438 residues: Protein translocase subunit SecY (438 aa).

Transmembrane regions (helical) follow at residues 18-38 (ILFTLGILVLYRVSAALPSPG), 76-96 (VGVMPYITASIIVQLLTVVIP), 121-141 (IALAVLQATSIVALAANGGLL), 154-174 (IFSLVVIVLVMTGGAALVMWM), 177-197 (LITERGIGNGMSLLIFVGIAA), 212-232 (GVIFAAVCLAALVIIVGVVFV), 269-289 (VIPVIFASSLIYIPHLITQLV), 315-335 (PVYINIYFGLIIFFTYFYVSV), 375-395 (LPGSIYLGAIAVLPNLFLQIG), and 398-418 (GEVQNLPFGGTAVLIMIGVGL).

The protein belongs to the SecY/SEC61-alpha family. As to quaternary structure, component of the Sec protein translocase complex. Heterotrimer consisting of SecY, SecE and SecG subunits. The heterotrimers can form oligomers, although 1 heterotrimer is thought to be able to translocate proteins. Interacts with the ribosome. Interacts with SecDF, and other proteins may be involved. Interacts with SecA.

The protein localises to the cell membrane. Its function is as follows. The central subunit of the protein translocation channel SecYEG. Consists of two halves formed by TMs 1-5 and 6-10. These two domains form a lateral gate at the front which open onto the bilayer between TMs 2 and 7, and are clamped together by SecE at the back. The channel is closed by both a pore ring composed of hydrophobic SecY resides and a short helix (helix 2A) on the extracellular side of the membrane which forms a plug. The plug probably moves laterally to allow the channel to open. The ring and the pore may move independently. The protein is Protein translocase subunit SecY of Mycobacterium leprae (strain TN).